The following is a 299-amino-acid chain: DNA-binding transcriptional repressor CapW (299 aa).

The segment at 1 to 22 (MTDESKPTDDQPTSKGRQGARW) is disordered. Residues 1–95 (MTDESKPTDD…SFKAVFPSSA (95 aa)) are winged HTH domain. The WYL domain stretch occupies residues 96-207 (VERYLDDLLR…LTRIKCCKYV (112 aa)). A WYL domain is found at 131 to 211 (GRRLNADIVG…KCCKYVGQDR (81 aa)). A probable ligand-binding region region spans residues 156–200 (YQSLTDPEGGERMLSPHALVHDGNRWHVRAYCHKRKAFRDFSLTR). The tract at residues 208 to 299 (GQDRDRADED…RDEIKDLIQY (92 aa)) is WCX domain.

In terms of assembly, homodimer.

Transcriptional regulator of a CBASS antivirus system. CBASS (cyclic oligonucleotide-based antiphage signaling system) provides immunity against bacteriophage. The CD-NTase protein synthesizes cyclic nucleotides in response to infection; these serve as specific second messenger signals. The signals activate a diverse range of effectors, leading to bacterial cell death and thus abortive phage infection. A type III CBASS system, part of a Cap17-CapW-CdnC-Cap7-Cap6-Cap18 locus. Binds specifically to palindromes that overlap the -10 site in the promoter of cdnC, found between the genes for divergently transcribed capW and cdnC (cognate DNA). Probably represses transcription bidirectionally from the promoter. The chain is DNA-binding transcriptional repressor CapW from Pseudomonas aeruginosa.